The following is a 116-amino-acid chain: Protein Rev (116 aa).

A phosphoserine; by host CK2 mark is found at S5 and S8. Residues 18-26 (LIKFLYQSN) are homomultimerization. Positions 23 to 49 (YQSNPPPNPEGTRQARRNRRRRWRERQ) are disordered. The Nuclear localization signal and RNA-binding (RRE) motif lies at 34–50 (TRQARRNRRRRWRERQR). Residues 36-47 (QARRNRRRRWRE) are compositionally biased toward basic residues. Residues 73-84 (LQLPPLERLTLD) carry the Nuclear export signal and binding to XPO1 motif. A phosphoserine; by host mark is found at S92 and S99.

It belongs to the HIV-1 REV protein family. Homomultimer; when bound to the RRE. Multimeric assembly is essential for activity and may involve XPO1. Binds to human KPNB1, XPO1, TNPO1, RANBP5 and IPO7. Interacts with the viral Integrase. Interacts with human KHDRBS1. Interacts with human NAP1; this interaction decreases Rev multimerization and stimulates its activity. Interacts with human DEAD-box helicases DDX3 and DDX24; these interactions may serve for viral RNA export to the cytoplasm and packaging, respectively. Interacts with human PSIP1; this interaction may inhibit HIV-1 DNA integration by promoting dissociation of the Integrase-LEDGF/p75 complex. Post-translationally, asymmetrically arginine dimethylated at one site by host PRMT6. Methylation impairs the RNA-binding activity and export of viral RNA from the nucleus to the cytoplasm. Phosphorylated by protein kinase CK2. Presence of, and maybe binding to the N-terminus of the regulatory beta subunit of CK2 is necessary for CK2-mediated Rev's phosphorylation.

Its subcellular location is the host nucleus. The protein localises to the host nucleolus. It localises to the host cytoplasm. Its function is as follows. Escorts unspliced or incompletely spliced viral pre-mRNAs (late transcripts) out of the nucleus of infected cells. These pre-mRNAs carry a recognition sequence called Rev responsive element (RRE) located in the env gene, that is not present in fully spliced viral mRNAs (early transcripts). This function is essential since most viral proteins are translated from unspliced or partially spliced pre-mRNAs which cannot exit the nucleus by the pathway used by fully processed cellular mRNAs. Rev itself is translated from a fully spliced mRNA that readily exits the nucleus. Rev's nuclear localization signal (NLS) binds directly to KPNB1/Importin beta-1 without previous binding to KPNA1/Importin alpha-1. KPNB1 binds to the GDP bound form of RAN (Ran-GDP) and targets Rev to the nucleus. In the nucleus, the conversion from Ran-GDP to Ran-GTP dissociates Rev from KPNB1 and allows Rev's binding to the RRE in viral pre-mRNAs. Rev multimerization on the RRE via cooperative assembly exposes its nuclear export signal (NES) to the surface. Rev can then form a complex with XPO1/CRM1 and Ran-GTP, leading to nuclear export of the complex. Conversion from Ran-GTP to Ran-GDP mediates dissociation of the Rev/RRE/XPO1/RAN complex, so that Rev can return to the nucleus for a subsequent round of export. Beside KPNB1, also seems to interact with TNPO1/Transportin-1, RANBP5/IPO5 and IPO7/RANBP7 for nuclear import. The nucleoporin-like HRB/RIP is an essential cofactor that probably indirectly interacts with Rev to release HIV RNAs from the perinuclear region to the cytoplasm. The protein is Protein Rev of Human immunodeficiency virus type 1 group M subtype B (isolate PCV12) (HIV-1).